The following is a 244-amino-acid chain: MAGHSKWANIKHAKARQDAKRGKVFTKLIREITVAARLGGEDIDSNPRLRAVVDKAFAANMPKDTITRAIKRGAGSGAGDNLVEVRYEGYGPSGVAVMVDCLTDNKNRTVAEVRHAFSKCDGNLGTEGSVAYLFKQRGLITFPPNSDEEKIMEIALEVGAEDVTTNDDGSIDVTTLPEDFEKIRNAMKAADLNPSHAEVTVLASTEVGLDKDSAEQMLRLTEMLEDLDDVQNVYSNADYPEEVL.

The protein belongs to the TACO1 family.

It is found in the cytoplasm. The sequence is that of Probable transcriptional regulatory protein CBU_1566 from Coxiella burnetii (strain RSA 493 / Nine Mile phase I).